A 449-amino-acid chain; its full sequence is Phosphoglucosamine mutase (449 aa).

Ser-100 functions as the Phosphoserine intermediate in the catalytic mechanism. Residues Ser-100, Asp-241, Asp-243, and Asp-245 each contribute to the Mg(2+) site. Ser-100 carries the post-translational modification Phosphoserine.

The protein belongs to the phosphohexose mutase family. It depends on Mg(2+) as a cofactor. In terms of processing, activated by phosphorylation.

It catalyses the reaction alpha-D-glucosamine 1-phosphate = D-glucosamine 6-phosphate. In terms of biological role, catalyzes the conversion of glucosamine-6-phosphate to glucosamine-1-phosphate. This Caldicellulosiruptor bescii (strain ATCC BAA-1888 / DSM 6725 / KCTC 15123 / Z-1320) (Anaerocellum thermophilum) protein is Phosphoglucosamine mutase.